Here is a 163-residue protein sequence, read N- to C-terminus: uncharacterized protein (163 aa).

The N-acetyltransferase domain maps to 7–162 (ISISAVKLPQ…NVVYMRLEMS (156 aa)).

The protein belongs to the acetyltransferase family.

It is found in the cytoplasm. Its subcellular location is the nucleus. This is an uncharacterized protein from Schizosaccharomyces pombe (strain 972 / ATCC 24843) (Fission yeast).